Here is a 137-residue protein sequence, read N- to C-terminus: Large ribosomal subunit protein uL16 (137 aa).

The span at 1-16 (MLQPKRTKFRKVHTGR) shows a compositional bias: basic residues. The interval 1–22 (MLQPKRTKFRKVHTGRNRGLAQ) is disordered.

Belongs to the universal ribosomal protein uL16 family. As to quaternary structure, part of the 50S ribosomal subunit.

Its function is as follows. Binds 23S rRNA and is also seen to make contacts with the A and possibly P site tRNAs. The sequence is that of Large ribosomal subunit protein uL16 from Idiomarina loihiensis (strain ATCC BAA-735 / DSM 15497 / L2-TR).